The sequence spans 336 residues: Dihydroorotate dehydrogenase (quinone) (336 aa).

FMN contacts are provided by residues 62 to 66 (AGLDK) and Thr-86. Lys-66 is a binding site for substrate. 111-115 (NRMGF) lines the substrate pocket. FMN contacts are provided by Asn-139 and Asn-172. A substrate-binding site is contributed by Asn-172. The Nucleophile role is filled by Ser-175. Residue Asn-177 coordinates substrate. FMN-binding residues include Lys-217 and Thr-245. 246–247 (NT) provides a ligand contact to substrate. Residues Gly-268, Gly-297, and 318-319 (YS) contribute to the FMN site.

It belongs to the dihydroorotate dehydrogenase family. Type 2 subfamily. In terms of assembly, monomer. Requires FMN as cofactor.

It localises to the cell membrane. It carries out the reaction (S)-dihydroorotate + a quinone = orotate + a quinol. It participates in pyrimidine metabolism; UMP biosynthesis via de novo pathway; orotate from (S)-dihydroorotate (quinone route): step 1/1. Catalyzes the conversion of dihydroorotate to orotate with quinone as electron acceptor. The protein is Dihydroorotate dehydrogenase (quinone) of Proteus mirabilis (strain HI4320).